Here is a 351-residue protein sequence, read N- to C-terminus: Anthranilate phosphoribosyltransferase (351 aa).

5-phospho-alpha-D-ribose 1-diphosphate-binding positions include G80, 83-84 (GD), T88, 90-93 (NIST), 108-116 (KHGNRSVTS), and S120. Anthranilate is bound at residue G80. S92 serves as a coordination point for Mg(2+). Anthranilate is bound at residue N111. Position 166 (R166) interacts with anthranilate. Positions 229 and 230 each coordinate Mg(2+).

Belongs to the anthranilate phosphoribosyltransferase family. Homodimer. Mg(2+) serves as cofactor.

It carries out the reaction N-(5-phospho-beta-D-ribosyl)anthranilate + diphosphate = 5-phospho-alpha-D-ribose 1-diphosphate + anthranilate. It participates in amino-acid biosynthesis; L-tryptophan biosynthesis; L-tryptophan from chorismate: step 2/5. Its function is as follows. Catalyzes the transfer of the phosphoribosyl group of 5-phosphorylribose-1-pyrophosphate (PRPP) to anthranilate to yield N-(5'-phosphoribosyl)-anthranilate (PRA). This is Anthranilate phosphoribosyltransferase from Chlorobium limicola (strain DSM 245 / NBRC 103803 / 6330).